The primary structure comprises 124 residues: Glutaredoxin-2 (124 aa).

C13 and C16 are oxidised to a cystine.

It belongs to the glutaredoxin family. Homodimer.

It is found in the host cytoplasm. In terms of biological role, glutaredoxin necessary for virion morphogenesis and virus replication. Functions as a thiol-disulfide transfer protein between membrane-associated OPG128 and substrates OPG095 or OPG053. The complete pathway for formation of disulfide bonds in intracellular virion membrane proteins sequentially involves oxidation of OPG072, OPG128 and OPG088. Exhibit thioltransferase and dehydroascorbate reductase activities in vitro. The protein is Glutaredoxin-2 (OPG088) of Camelus.